Consider the following 533-residue polypeptide: Lysine--tRNA ligase (533 aa).

The 'HIGH' region motif lies at Pro-28–Asn-36. A 'KMSKS' region motif is present at residues Pro-278 to Ser-282.

Belongs to the class-I aminoacyl-tRNA synthetase family.

It localises to the cytoplasm. The catalysed reaction is tRNA(Lys) + L-lysine + ATP = L-lysyl-tRNA(Lys) + AMP + diphosphate. This Methanococcus maripaludis (strain DSM 14266 / JCM 13030 / NBRC 101832 / S2 / LL) protein is Lysine--tRNA ligase (lysS).